A 794-amino-acid polypeptide reads, in one-letter code: Signal transducer and activator of transcription 5A (794 aa).

Y90 bears the Phosphotyrosine mark. Residues S128 and S193 each carry the phosphoserine modification. Residues 589–686 (WNDGAILGFV…EVFSKYYTPV (98 aa)) form the SH2 domain. Y682 is modified (phosphotyrosine). Y694 is subject to Phosphotyrosine; by JAK2. The tract at residues 773–794 (DSLDSRLSPPAGLFTSARGSLS) is disordered. At S780 the chain carries Phosphoserine.

It belongs to the transcription factor STAT family. As to quaternary structure, forms a homodimer or a heterodimer with a related family member. Binds NR3C1. Interacts with NCOA1 and SOCS7. Interacts with ERBB4. Interacts with EBF4. Interacts with CD69. Post-translationally, tyrosine phosphorylated in response to KITLG/SCF, IL2, IL3, IL7, IL15, CSF2/GMCSF, GH1, PRL, EPO and THPO. Activated KIT promotes phosphorylation on tyrosine residues and subsequent translocation to the nucleus. Tyrosine phosphorylated in response to constitutively activated FGFR1, FGFR2, FGFR3 and FGFR4. Tyrosine phosphorylation is required for DNA-binding activity and dimerization. Serine phosphorylation is also required for maximal transcriptional activity. Tyrosine phosphorylated in response to signaling via activated FLT3; wild-type FLT3 results in much weaker phosphorylation than constitutively activated mutant FLT3. Alternatively, can be phosphorylated by JAK2 at Tyr-694. In terms of processing, ISGylated.

The protein localises to the cytoplasm. It localises to the nucleus. Carries out a dual function: signal transduction and activation of transcription. Mediates cellular responses to the cytokine KITLG/SCF and other growth factors. Mediates cellular responses to ERBB4. May mediate cellular responses to activated FGFR1, FGFR2, FGFR3 and FGFR4. Binds to the GAS element and activates PRL-induced transcription. Regulates the expression of milk proteins during lactation. The chain is Signal transducer and activator of transcription 5A (STAT5A) from Homo sapiens (Human).